Consider the following 40-residue polypeptide: Dolichyl-diphosphooligosaccharide--protein glycosyltransferase subunit 4 (40 aa).

Over 1–4 the chain is Lumenal; that stretch reads MITD. The chain crosses the membrane as a helical span at residues 5-25; the sequence is VQLAIFSNVLGVFLFLLVVAY. Residues 26–40 are Cytoplasmic-facing; sequence HYINANTGKSSIKNK.

The protein belongs to the OST4 family. In terms of assembly, component of the oligosaccharyltransferase (OST) complex.

Its subcellular location is the endoplasmic reticulum membrane. Its function is as follows. Subunit of the oligosaccharyl transferase (OST) complex that catalyzes the initial transfer of a defined glycan (Glc(3)Man(9)GlcNAc(2) in eukaryotes) from the lipid carrier dolichol-pyrophosphate to an asparagine residue within an Asn-X-Ser/Thr consensus motif in nascent polypeptide chains, the first step in protein N-glycosylation. N-glycosylation occurs cotranslationally and the complex associates with the Sec61 complex at the channel-forming translocon complex that mediates protein translocation across the endoplasmic reticulum (ER). All subunits are required for a maximal enzyme activity. The polypeptide is Dolichyl-diphosphooligosaccharide--protein glycosyltransferase subunit 4 (Drosophila mojavensis (Fruit fly)).